The primary structure comprises 951 residues: Zinc fingers and homeoboxes protein 3 (951 aa).

Residues 1 to 66 (MASKRKSTTP…SSTDGSALAN (66 aa)) are disordered. A required for nuclear localization region spans residues 1 to 107 (MASKRKSTTP…SEHTDFNKDP (107 aa)). Residues 42-58 (PSEAPDASSEAAPNPSS) are compositionally biased toward low complexity. 2 C2H2-type zinc fingers span residues 77–100 (YCCK…NSEH) and 109–132 (FVCT…AKCH). The interval 227 to 252 (TFINGAAPGSQASAKSTKPPPAANGP) is disordered. The tract at residues 238–483 (ASAKSTKPPP…LLTACPSITS (246 aa)) is required for homodimerization and interaction with NFYA. A required for repressor activity region spans residues 299–497 (LSSIPTYNAA…DANIYKNKKS (199 aa)). 2 consecutive DNA-binding regions (homeobox) follow at residues 300 to 359 (SSIP…GISW) and 489 to 548 (ANIY…RNLK). The required for nuclear localization stretch occupies residues 492–550 (YKNKKSHEQLSALKGSFCRNQFPGQSEVEHLTKVTGLSTREVRKWFSDRRYHCRNLKGS). Ser599 bears the Phosphoserine mark. The homeobox 3 DNA-binding region spans 607–666 (TPTKYKERAPEQLRVLENSFAQNPLPPEEELDRLRSETKMTRREIDGWFSERRKKVNTEE). Basic and acidic residues predominate over residues 662 to 676 (VNTEETKKADGHMPK). The segment at 662 to 690 (VNTEETKKADGHMPKEEEEGAEQEGRDEE) is disordered. Positions 677–690 (EEEEGAEQEGRDEE) are enriched in acidic residues. 2 positions are modified to phosphoserine: Ser703 and Ser718. DNA-binding regions (homeobox) lie at residues 759 to 818 (PSKV…KNGQ) and 830 to 889 (FPPG…TRAV). Positions 916-951 (SELSENSESWEPSAPEASSEPFDTSSPQSGRQLEAD) are disordered. Low complexity predominate over residues 919-936 (SENSESWEPSAPEASSEP). Ser922 and Ser941 each carry phosphoserine. The segment covering 937–951 (FDTSSPQSGRQLEAD) has biased composition (polar residues).

Belongs to the ZHX family. Homodimer (via homeobox domain 1). Heterodimer with ZHX1 (via homeobox domain 1). Heterodimer with ZHX2 (via homeobox domain 1). Heterodimerization with ZHX1 is a prerequisite for repressor activity. Interacts with NFYA. In terms of tissue distribution, ubiquitously expressed.

It is found in the nucleus. Acts as a transcriptional repressor. Involved in the early stages of mesenchymal stem cell (MSC) osteogenic differentiation. Is a regulator of podocyte gene expression during primary glomerula disease. Binds to promoter DNA. The chain is Zinc fingers and homeoboxes protein 3 (Zhx3) from Mus musculus (Mouse).